Reading from the N-terminus, the 2034-residue chain is Host cell factor 1 (2034 aa).

The residue at position 2 (Ala-2) is an N-acetylalanine. At Ser-6 the chain carries Phosphoserine. Kelch repeat units follow at residues 44–89 (LIVV…GFVC), 93–140 (RLLV…RLGH), 148–194 (KCYL…ITYG), 217–265 (KLVI…TIGN), and 266–313 (KMYV…LMDT). Glycyl lysine isopeptide (Lys-Gly) (interchain with G-Cter in ubiquitin) cross-links involve residues Lys-105, Lys-163, and Lys-244. Lys-282 participates in a covalent cross-link: Glycyl lysine isopeptide (Lys-Gly) (interchain with G-Cter in SUMO2). An N6-acetyllysine modification is found at Lys-288. A Glycyl lysine isopeptide (Lys-Gly) (interchain with G-Cter in ubiquitin) cross-link involves residue Lys-363. The Fibronectin type-III 1 domain maps to 366-469 (PPARVQLVRA…TIQVLPTVPG (104 aa)). Residues 407–434 (ATATSPTPNPVPSVPANPPKSPAPAAAA) are disordered. Phosphoserine is present on Ser-411. The span at 413 to 428 (TPNPVPSVPANPPKSP) shows a compositional bias: pro residues. A required for interaction with OGT region spans residues 500–550 (LVTMRPASQAGKAPVTVTSLPASVRMVVPTQSAQGTVIGSNPQMSGMAALA). Arg-504 and Arg-524 each carry omega-N-methylarginine. Ser-598, Ser-666, and Ser-669 each carry phosphoserine. Positions 610–722 (LKTAAAQVGT…KGPLPAGTIL (113 aa)) are interaction with SIN3A. The interval 750-902 (ILGISSVSPS…SLAGAGAHST (153 aa)) is interaction with ZBTB17. At Lys-813 the chain carries N6-acetyllysine. The tract at residues 813-912 (KIITAVPKIA…SASLATPITT (100 aa)) is interaction with GABP2. 3 HCF repeat repeats span residues 1010 to 1035 (TLVC…TVVA), 1072 to 1097 (VRVC…ATSN), and 1101 to 1126 (QHGC…AMSS). The HCF repeat 4; degenerate repeat unit spans residues 1156–1182 (RAQGTVKPPCQTQQTNMTSTTMTVQAT). Ser-1204 and Ser-1223 each carry phosphoserine. 4 disordered regions span residues 1221–1241 (GPSS…TYTT), 1302–1374 (PCET…TTST), 1444–1477 (TVTS…NITS), and 1491–1525 (RAVT…QLPP). HCF repeat repeat units lie at residues 1295–1320 (TQVC…SNAG) and 1323–1348 (QRVC…ATSN). A compositionally biased stretch (low complexity) spans 1308 to 1321 (TGTTNTATTSNAGS). The HCF repeat 7; degenerate repeat unit spans residues 1358-1383 (QQPASGHPCETHQTTSTGTTMSVSVG). The HCF repeat 8 repeat unit spans residues 1423–1448 (QRVCSNPPCETHETGTTHTATTVTSN). Low complexity predominate over residues 1491-1501 (RAVTTVTQSTP). A Phosphothreonine modification is found at Thr-1500. Residues 1502 to 1511 (VPGPSVPPPE) show a composition bias toward pro residues. A phosphoserine mark is found at Ser-1506 and Ser-1516. Residues 1693 to 1723 (IVLTQQELAALVQQQQQLQEAQAQAQQQHHL) adopt a coiled-coil conformation. Ser-1782 carries the phosphoserine modification. Fibronectin type-III domains follow at residues 1808–1899 (LPPP…TCLP) and 1901–2017 (FPGA…TSKD). Residues Lys-1818 and Lys-1819 each participate in a glycyl lysine isopeptide (Lys-Gly) (interchain with G-Cter in ubiquitin) cross-link. Position 1849 is a phosphoserine (Ser-1849). The tract at residues 2005 to 2034 (ATQVRWLQETSKDSSGTKPASKRPMSSPEM) is disordered. Lys-2016 is modified (N6-acetyllysine).

As to quaternary structure, composed predominantly of six polypeptides ranging from 110 to 150 kDa and a minor 300 kDa polypeptide. The majority of N- and C-terminal cleavage products remain tightly, albeit non-covalently, associated. Interacts with POU2F1, CREB3, ZBTB17, EGR2, E2F4, CREBZF, SP1, GABP2, Sin3 HDAC complex (SIN3A, HDAC1, HDAC2, SUDS3), SAP30, SIN3B and FHL2. Component of a MLL1 complex, composed of at least the core components KMT2A/MLL1, ASH2L, HCFC1, WDR5 and RBBP5, as well as the facultative components BACC1, CHD8, DPY30, E2F6, HCFC2, HSP70, INO80C, KANSL1, LAS1L, MAX, MCRS1, MEN1, MGA, KAT8, PELP1, PHF20, PRP31, RING2, RUVBL1, RUVBL2, SENP3, TAF1, TAF4, TAF6, TAF7, TAF9 and TEX10. Component of a THAP1/THAP3-HCFC1-OGT complex that is required for the regulation of the transcriptional activity of RRM1. Interacts directly with THAP3 (via its HBM). Interacts (via the Kelch-repeat domain) with THAP1 (via the HBM); the interaction recruits HCHC1 to the RRM1. Interacts with THAP7 and THAP11 (via the HMB). Interacts directly with OGT; the interaction, which requires the HCFC1 cleavage site domain, glycosylates and promotes the proteolytic processing of HCFC1, retains OGT in the nucleus and impacts the expression of herpes simplex virus immediate early viral genes. Component of the SET1 complex, at least composed of the catalytic subunit (SETD1A or SETD1B), WDR5, WDR82, RBBP5, ASH2L, CXXC1, HCFC1 and DPY30. Component of the NSL complex at least composed of MOF/KAT8, KANSL1, KANSL2, KANSL3, MCRS1, PHF20, OGT1/OGT, WDR5 and HCFC1. Component of a complex at least composed of ZNF335, HCFC1, CCAR2, EMSY, MKI67, RBBP5, ASH2L and WDR5; the complex is formed as a result of interactions between components of a nuclear receptor-mediated transcription complex and a histone methylation complex. Within the complex interacts with ZNF335. Interacts with TET2 and TET3. Interacts with HCFC1R1. Interacts with THAP11. Interacts (via Kelch domain) with KMT2E/MLL5 isoform 3 (via HBM motif). Interacts with E2F1. Accessory scaffold component of the polycomb repressive deubiquitinase (PR-DUB) complex, at least composed of BAP1, one of ASXL1, ASXL2 or (probably) ASXL3 and one of MBD5 or MBD6; the PR-DUB core associates with a number of accessory proteins, including FOXK1, FOXK2, KDM1B, HCFC1, YY1 and OGT. Interacts with YY1 (via Gly-rich region); the interaction is direct. Interacts with BAP1 (via HBM-like motif). In terms of processing, proteolytically cleaved at one or several PPCE--THET sites within the HCF repeats. Further cleavage of the primary N- and C-terminal chains results in a 'trimming' and accumulation of the smaller chains. Cleavage is promoted by O-glycosylation. Post-translationally, O-glycosylated. GlcNAcylation by OGT promotes proteolytic processing. Ubiquitinated. Lys-1818 and Lys-1819 are ubiquitinated both via 'Lys-48'- and 'Lys-63'-linked polyubiquitin chains. BAP1 mediated deubiquitination of 'Lys-48'-linked polyubiquitin chains; deubiquitination by BAP1 does not seem to stabilize the protein.

The protein localises to the cytoplasm. It is found in the nucleus. In terms of biological role, transcriptional coregulator. Serves as a scaffold protein, bridging interactions between transcription factors, including THAP11 and ZNF143, and transcriptional coregulators. Involved in control of the cell cycle. Also antagonizes transactivation by ZBTB17 and GABP2; represses ZBTB17 activation of the p15(INK4b) promoter and inhibits its ability to recruit p300. Coactivator for EGR2 and GABP2. Tethers the chromatin modifying Set1/Ash2 histone H3 'Lys-4' methyltransferase (H3K4me) and Sin3 histone deacetylase (HDAC) complexes (involved in the activation and repression of transcription, respectively) together. Component of a THAP1/THAP3-HCFC1-OGT complex that is required for the regulation of the transcriptional activity of RRM1. As part of the NSL complex it may be involved in acetylation of nucleosomal histone H4 on several lysine residues. Recruits KMT2E/MLL5 to E2F1 responsive promoters promoting transcriptional activation and thereby facilitates G1 to S phase transition. Modulates expression of homeobox protein PDX1, perhaps acting in concert with transcription factor E2F1, thereby regulating pancreatic beta-cell growth and glucose-stimulated insulin secretion. May negatively modulate transcriptional activity of FOXO3. In Rattus norvegicus (Rat), this protein is Host cell factor 1.